The sequence spans 385 residues: Odorant receptor 82a (385 aa).

Topologically, residues 1 to 32 (MGRLFQLQEYCLRAMGHKDDMDSTDSTALSLK) are cytoplasmic. Residues 33 to 53 (HISSLIFVISAQYPLISYVAY) traverse the membrane as a helical segment. Residues 54–62 (NRNDMEKVT) are Extracellular-facing. A helical transmembrane segment spans residues 63 to 83 (ACLSVVFTNMLTVIKISTFLA). Topologically, residues 84-131 (NRKDFWEMIHRFRKMHEQSASHIPRYREGLDYVAEANKLASFLGRAYC) are cytoplasmic. A helical transmembrane segment spans residues 132 to 152 (VSCGLTGLYFMLGPIVKIGVC). At 153–186 (RWHGTTCDKELPMPMKFPFNDLESPGYEVCFLYT) the chain is on the extracellular side. The helical transmembrane segment at 187–207 (VLVTVVVVAYASAVDGLFISF) threads the bilayer. Residues 208–257 (AINLRAHFQTLQRQIENWEFPSSEPDTQIRLKSIVEYHVLLLSLSRKLRS) are Cytoplasmic-facing. A helical membrane pass occupies residues 258–278 (IYTPTVMGQFVITSLQVGVII). The Extracellular portion of the chain corresponds to 279-290 (YQLVTNMDSVMD). A helical transmembrane segment spans residues 291-311 (LLLYASFFGSIMLQLFIYCYG). The Cytoplasmic portion of the chain corresponds to 312–357 (GEIIKAESLQVDTAVRLSNWHLASPKTRTSLSLIILQSQKEVLIRA). A helical membrane pass occupies residues 358-378 (GFFVASLANFVGICRTALSLI). The Extracellular portion of the chain corresponds to 379-385 (TLIKSIE).

It belongs to the insect chemoreceptor superfamily. Heteromeric odorant receptor channel (TC 1.A.69) family. Or1a subfamily. In terms of assembly, interacts with Orco. Complexes exist early in the endomembrane system in olfactory sensory neurons (OSNs), coupling these complexes to the conserved ciliary trafficking pathway. As to expression, expressed in olfactory sensory neurons in the antenna.

It is found in the cell membrane. In terms of biological role, odorant receptor which mediates acceptance or avoidance behavior, depending on its substrates. The odorant receptor repertoire encodes a large collection of odor stimuli that vary widely in identity, intensity, and duration. May form a complex with Orco to form odorant-sensing units, providing sensitive and prolonged odorant signaling and calcium permeability. The chain is Odorant receptor 82a (Or82a) from Drosophila melanogaster (Fruit fly).